A 682-amino-acid chain; its full sequence is Serine/threonine-protein kinase PLK2 (682 aa).

Residues 25-67 (ACGGDSKKKRPQQPSEDGQSQAQVTPAAPHHHHHHSHSGPEIS) form a disordered region. Residues 36–48 (QQPSEDGQSQAQV) are compositionally biased toward polar residues. Residues 79–331 (YCRGKVLGKG…LDDIIRHDFF (253 aa)) form the Protein kinase domain. ATP-binding positions include 85–93 (LGKGGFAKC) and lysine 108. Aspartate 202 (proton acceptor) is an active-site residue. At threonine 236 the chain carries Phosphothreonine. Residues 402–430 (TSITQQPSKHRTDEELQPPPTTFAKSGTS) are disordered. POLO box domains follow at residues 500 to 578 (WVTK…YMEE) and 598 to 682 (YLLQ…QRCN).

This sequence belongs to the protein kinase superfamily. Ser/Thr protein kinase family. CDC5/Polo subfamily. In terms of assembly, interacts with CIB1. Interacts with NSF; causing NSF dissociation from GRIA2. Post-translationally, catalytic activity is enhanced by phosphorylation of Thr-236.

It localises to the cytoplasm. It is found in the cytoskeleton. Its subcellular location is the microtubule organizing center. The protein localises to the centrosome. The protein resides in the centriole. It localises to the cell projection. It is found in the dendrite. It carries out the reaction L-seryl-[protein] + ATP = O-phospho-L-seryl-[protein] + ADP + H(+). The catalysed reaction is L-threonyl-[protein] + ATP = O-phospho-L-threonyl-[protein] + ADP + H(+). With respect to regulation, activated by phosphorylation of Thr-236. Once activated, activity is stimulated by binding target proteins. In terms of biological role, tumor suppressor serine/threonine-protein kinase involved in synaptic plasticity, centriole duplication and G1/S phase transition. Polo-like kinases act by binding and phosphorylating proteins that are already phosphorylated on a specific motif recognized by the POLO box domains. Phosphorylates CPAP, NPM1, RAPGEF2, RASGRF1, SNCA, SIPA1L1 and SYNGAP1. Plays a key role in synaptic plasticity and memory by regulating the Ras and Rap protein signaling: required for overactivity-dependent spine remodeling by phosphorylating the Ras activator RASGRF1 and the Rap inhibitor SIPA1L1 leading to their degradation by the proteasome. Conversely, phosphorylates the Rap activator RAPGEF2 and the Ras inhibitor SYNGAP1, promoting their activity. Also regulates synaptic plasticity independently of kinase activity, via its interaction with NSF that disrupts the interaction between NSF and the GRIA2 subunit of AMPARs, leading to a rapid rundown of AMPAR-mediated current that occludes long term depression. Required for procentriole formation and centriole duplication by phosphorylating CPAP and NPM1, respectively. Its induction by p53/TP53 suggests that it may participate in the mitotic checkpoint following stress. This is Serine/threonine-protein kinase PLK2 (Plk2) from Rattus norvegicus (Rat).